A 235-amino-acid chain; its full sequence is Small ribosomal subunit protein uS2c (235 aa).

The protein belongs to the universal ribosomal protein uS2 family.

The protein resides in the plastid. It is found in the chloroplast. The polypeptide is Small ribosomal subunit protein uS2c (rps2) (Marchantia polymorpha (Common liverwort)).